An 89-amino-acid polypeptide reads, in one-letter code: Small ribosomal subunit protein uS15 (89 aa).

Residues 1 to 11 (MSIAAERKAEV) are compositionally biased toward basic and acidic residues. The interval 1 to 25 (MSIAAERKAEVIKTSANKPGDTGSP) is disordered.

It belongs to the universal ribosomal protein uS15 family. As to quaternary structure, part of the 30S ribosomal subunit. Forms a bridge to the 50S subunit in the 70S ribosome, contacting the 23S rRNA.

One of the primary rRNA binding proteins, it binds directly to 16S rRNA where it helps nucleate assembly of the platform of the 30S subunit by binding and bridging several RNA helices of the 16S rRNA. In terms of biological role, forms an intersubunit bridge (bridge B4) with the 23S rRNA of the 50S subunit in the ribosome. This chain is Small ribosomal subunit protein uS15, found in Nitrobacter winogradskyi (strain ATCC 25391 / DSM 10237 / CIP 104748 / NCIMB 11846 / Nb-255).